The chain runs to 487 residues: Putative B3 domain-containing protein At1g78640 (487 aa).

DNA-binding regions (TF-B3) lie at residues 171–269 and 379–474; these read RLLL…QQGT and RLTL…LFRV.

The protein localises to the nucleus. This is Putative B3 domain-containing protein At1g78640 from Arabidopsis thaliana (Mouse-ear cress).